Reading from the N-terminus, the 314-residue chain is Putative thiamine biosynthesis protein HI_0357 (314 aa).

The protein belongs to the NMT1/THI5 family.

Probably involved in thiamine biosynthesis. The sequence is that of Putative thiamine biosynthesis protein HI_0357 from Haemophilus influenzae (strain ATCC 51907 / DSM 11121 / KW20 / Rd).